A 343-amino-acid chain; its full sequence is Ubiquitin carboxyl-terminal hydrolase isozyme L5 (343 aa).

The 213-residue stretch at 6–218 (GWCTIESDPG…IRFNLMAVIK (213 aa)) folds into the UCH catalytic domain. C83 serves as the catalytic Nucleophile. The active-site Proton donor is H157. The tract at residues 242–266 (LSELNSGSGGDNKEESGGATPTTKE) is disordered. One can recognise a ULD domain in the interval 306-334 (NFTPLILNLIKGLAEKDNLQPLIQKAKDQ).

It belongs to the peptidase C12 family. As to quaternary structure, component of the 19S (PA700) regulatory complex of the 26S proteasome.

The protein localises to the cytoplasm. It is found in the nucleus. The catalysed reaction is Thiol-dependent hydrolysis of ester, thioester, amide, peptide and isopeptide bonds formed by the C-terminal Gly of ubiquitin (a 76-residue protein attached to proteins as an intracellular targeting signal).. Its function is as follows. Protease that specifically cleaves 'Lys-48'-linked polyubiquitin chains. Deubiquitinating enzyme associated with the 19S regulatory subunit of the 26S proteasome. This Dictyostelium discoideum (Social amoeba) protein is Ubiquitin carboxyl-terminal hydrolase isozyme L5 (uch2).